We begin with the raw amino-acid sequence, 839 residues long: Flocculation protein FLO11 (839 aa).

Residues 1-22 (MVSLRSIFTSSILAAGLTRAHG) form the signal peptide. The Flo11 1 domain occupies 24-194 (SGKTCPTSEV…PKKCSSDCGV (171 aa)). 4 cysteine pairs are disulfide-bonded: Cys28–Cys188, Cys37–Cys167, Cys129–Cys192, and Cys143–Cys152. The N-linked (GlcNAc...) asparagine glycan is linked to Asn79. The disordered stretch occupies residues 187–342 (KCSSDCGVEP…GPTCPTSEVS (156 aa)). The span at 198 to 317 (TSDEPEEPTT…EPTTSEEPEE (120 aa)) shows a compositional bias: acidic residues. One can recognise a Flo11 2 domain in the interval 332–502 (EGPTCPTSEV…PKKCSSNCGV (171 aa)). N-linked (GlcNAc...) asparagine glycosylation occurs at Asn387. The segment at 496–606 (CSSNCGVEPT…LVPTTKTETD (111 aa)) is disordered. The span at 506–592 (TSDEPEEPTT…PTTSDEEPGT (87 aa)) shows a compositional bias: acidic residues. A compositionally biased stretch (low complexity) spans 593–606 (TEEPLVPTTKTETD).

The protein belongs to the flocculin family. Highly divergent.

Homophilic binding protein that enables kin discrimination in heterogeneous yeast populations by mediating homotypic cell-cell interactions during flocculation, a reversible and asexual process in which cells adhere to form aggregates (flocs). The polypeptide is Flocculation protein FLO11 (Komagataella phaffii (strain GS115 / ATCC 20864) (Yeast)).